Here is a 258-residue protein sequence, read N- to C-terminus: Proteasome subunit beta type-1 (258 aa).

Belongs to the peptidase T1B family. In terms of assembly, the 26S proteasome consists of a 20S proteasome core and two 19S regulatory subunits. The 20S proteasome core is composed of 28 subunits that are arranged in four stacked rings, resulting in a barrel-shaped structure. The two end rings are each formed by seven alpha subunits, and the two central rings are each formed by seven beta subunits. The catalytic chamber with the active sites is on the inside of the barrel.

The protein resides in the cytoplasm. The protein localises to the nucleus. Its function is as follows. Non-catalytic component of the proteasome, a multicatalytic proteinase complex which is characterized by its ability to cleave peptides with Arg, Phe, Tyr, Leu, and Glu adjacent to the leaving group at neutral or slightly basic pH. The proteasome has an ATP-dependent proteolytic activity. The protein is Proteasome subunit beta type-1 (pbs-6) of Caenorhabditis elegans.